Reading from the N-terminus, the 283-residue chain is uncharacterized protein (283 aa).

A run of 6 helical transmembrane segments spans residues 28-48, 65-85, 113-133, 135-155, 200-220, and 246-266; these read LSSTSGAIGAIFGIILSILLI, LTSLIVASFGFLIALIIGFIL, LKRGFLYWIGNIILSIIFMIV, ILFIIFGVFLIFLPLVGIVFI, LNYIILLIIVGVIVIVINFVV, and IVDVISAVISAFVGFYTAVFA.

To M.jannaschii MJ0233.

It is found in the cell membrane. This is an uncharacterized protein from Methanocaldococcus jannaschii (strain ATCC 43067 / DSM 2661 / JAL-1 / JCM 10045 / NBRC 100440) (Methanococcus jannaschii).